Here is a 283-residue protein sequence, read N- to C-terminus: Nicotine 6-hydroxylase medium subunit (283 aa).

Positions Met-1–Asn-176 constitute an FAD-binding PCMH-type domain. Residues Ala-31–Ser-35 and Thr-110–Ser-114 contribute to the FAD site.

Heterotrimer composed of a large subunit (NdhL), a medium subunit (NdhM) and a small subunit (NdhS). It depends on FAD as a cofactor.

The protein localises to the cytoplasm. It catalyses the reaction (R)-nicotine + A + H2O = (R)-6-hydroxynicotine + AH2. It carries out the reaction (S)-nicotine + A + H2O = (S)-6-hydroxynicotine + AH2. It functions in the pathway alkaloid degradation; nicotine degradation; 6-hydroxypseudooxynicotine from nicotine (R-isomer route): step 1/2. Its pathway is alkaloid degradation; nicotine degradation; 6-hydroxypseudooxynicotine from nicotine (S-isomer route): step 1/2. With respect to regulation, nicotine dehydrogenase activity is inhibited by tungsten. Its function is as follows. Component of the nicotine 6-hydroxylase, which is involved in the degradation of nicotine. Catalyzes the hydroxylation of the pyridine ring at C6 to form 6-hydroxynicotine. Can use both L-nicotine and D-nicotine. The sequence is that of Nicotine 6-hydroxylase medium subunit from Paenarthrobacter nicotinovorans (Arthrobacter nicotinovorans).